Consider the following 292-residue polypeptide: Undecaprenyl-diphosphatase (292 aa).

7 helical membrane passes run 1-21, 46-66, 90-110, 114-134, 192-212, 225-245, and 253-273; these read MSLV…FLPV, FVTI…RADI, LGWY…LLEH, ALGN…LLAA, FLLS…STVP, VVGT…LLAW, and VFVV…LSGV.

This sequence belongs to the UppP family.

Its subcellular location is the cell inner membrane. The catalysed reaction is di-trans,octa-cis-undecaprenyl diphosphate + H2O = di-trans,octa-cis-undecaprenyl phosphate + phosphate + H(+). In terms of biological role, catalyzes the dephosphorylation of undecaprenyl diphosphate (UPP). Confers resistance to bacitracin. In Anaeromyxobacter dehalogenans (strain 2CP-1 / ATCC BAA-258), this protein is Undecaprenyl-diphosphatase.